Consider the following 259-residue polypeptide: UPF0246 protein PBPRA0561 (259 aa).

It belongs to the UPF0246 family.

The protein is UPF0246 protein PBPRA0561 of Photobacterium profundum (strain SS9).